The chain runs to 131 residues: Snaclec A13 (131 aa).

3 cysteine pairs are disulfide-bonded: C4–C15, C32–C125, and C100–C117. One can recognise a C-type lectin domain in the interval 11 to 126 (YEGHCYKVFN…CELAYHFICM (116 aa)).

The protein belongs to the snaclec family. Heterodimer; disulfide-linked. Expressed by the venom gland.

It is found in the secreted. Functionally, interferes with one step of hemostasis (modulation of platelet aggregation, or coagulation cascade, for example). This is Snaclec A13 from Macrovipera lebetinus (Levantine viper).